The chain runs to 620 residues: Glutathione-regulated potassium-efflux system protein KefC (620 aa).

A run of 12 helical transmembrane segments spans residues 4 to 24 (HTLIQALIYLGSAALIVPIAV), 26 to 46 (LGLGSVLGYLIAGCIIGPWGL), 54 to 74 (SILHFAEIGVVLMLFIIGLEL), 90 to 110 (GALQMVICGGLLGLFCMLLGL), 114 to 134 (VAELIGMTLALSSTAIAMQAM), 149 to 169 (FAVLLFQDIAAIPLVAMIPLL), 178 to 198 (MGAFALSALKVAGALVLVVLL), 218 to 238 (VFSAVALFLVFGFGLLLEEVG), 270 to 290 (GLLLGLFFIGVGMSIDFGTLL), 294 to 314 (LRIVILLLGFLIIKIAMLWLI), 327 to 347 (WFAVLLGQGSEFAFVVFGAAQ), and 359 to 379 (SLTLAVALSMAATPILLVILN). The region spanning 399–518 (QPRVIIAGFG…AGVEKPERET (120 aa)) is the RCK N-terminal domain. The segment at 597–620 (GWQGTEEGKHTGNMADEPETKPSS) is disordered.

Belongs to the monovalent cation:proton antiporter 2 (CPA2) transporter (TC 2.A.37) family. KefC subfamily. As to quaternary structure, homodimer. Interacts with the regulatory subunit KefF.

The protein resides in the cell inner membrane. Pore-forming subunit of a potassium efflux system that confers protection against electrophiles. Catalyzes K(+)/H(+) antiport. The chain is Glutathione-regulated potassium-efflux system protein KefC from Escherichia coli O7:K1 (strain IAI39 / ExPEC).